A 406-amino-acid chain; its full sequence is Serine/threonine transporter SstT (406 aa).

A run of 9 helical transmembrane segments spans residues 21–41, 45–65, 79–99, 138–158, 179–199, 213–233, 285–305, 313–333, and 360–380; these read LIIG…VAIL, FVGA…MGAI, ILIL…IASF, ALMN…GLAL, VVKW…FDSI, LLLL…PLIV, ISIP…IAVL, LGIT…AIAA, and IAMQ…SCET.

It belongs to the dicarboxylate/amino acid:cation symporter (DAACS) (TC 2.A.23) family.

Its subcellular location is the cell membrane. The enzyme catalyses L-serine(in) + Na(+)(in) = L-serine(out) + Na(+)(out). The catalysed reaction is L-threonine(in) + Na(+)(in) = L-threonine(out) + Na(+)(out). Involved in the import of serine and threonine into the cell, with the concomitant import of sodium (symport system). The polypeptide is Serine/threonine transporter SstT (Desulfitobacterium hafniense (strain Y51)).